The sequence spans 279 residues: Fatty-acid-binding protein 1 (279 aa).

Arginine 103, tyrosine 116, and serine 183 together coordinate dodecanoate.

This sequence belongs to the chalcone isomerase family. As to expression, expressed in developing cotyledons, young seedlings, roots, seeds, embryos, macrospores, preanthesis and tapetum. Restricted to developing and reproductive tissues.

Its subcellular location is the plastid. It localises to the chloroplast stroma. Its function is as follows. Fatty-acid-binding protein. Interacts preferentially with saturated fatty acid. May be involved in alpha-linolenic (C18:3) metabolism. The polypeptide is Fatty-acid-binding protein 1 (FAP1) (Arabidopsis thaliana (Mouse-ear cress)).